Consider the following 330-residue polypeptide: Protoheme IX farnesyltransferase (330 aa).

The next 9 membrane-spanning stretches (helical) occupy residues 33-53 (VMTL…VDAD), 54-74 (PFLA…AGAL), 101-121 (VSNA…LMAL), 126-146 (LAAG…TMIL), 154-174 (IVIG…AATG), 180-200 (AVIL…ALAL), 227-247 (ILLY…TGLG), 250-270 (VYGA…WRIF), and 308-328 (VLFA…IPGV).

Belongs to the UbiA prenyltransferase family. Protoheme IX farnesyltransferase subfamily. In terms of assembly, interacts with CtaA.

The protein localises to the cell inner membrane. The enzyme catalyses heme b + (2E,6E)-farnesyl diphosphate + H2O = Fe(II)-heme o + diphosphate. It functions in the pathway porphyrin-containing compound metabolism; heme O biosynthesis; heme O from protoheme: step 1/1. Converts heme B (protoheme IX) to heme O by substitution of the vinyl group on carbon 2 of heme B porphyrin ring with a hydroxyethyl farnesyl side group. This Maricaulis maris (strain MCS10) (Caulobacter maris) protein is Protoheme IX farnesyltransferase.